A 329-amino-acid chain; its full sequence is Protein phosphatase 1 regulatory subunit 42 (329 aa).

7 LRR repeats span residues 30 to 51 (KLTH…SVCR), 52 to 73 (NLTV…GFAS), 74 to 95 (NLTH…SSLH), 96 to 117 (KLSK…EELK), 118 to 139 (SLKE…AFDP), 148 to 169 (TLCI…APLR), and 170 to 191 (KMTH…ETVF). The 39-residue stretch at 205-243 (NPVCHKPKYRDRLITVCKFLDDLDGKQINELSRQFLINW) folds into the LRRCT domain. The interval 268 to 329 (STSADFHLGP…SSTEWQSLKI (62 aa)) is disordered. Over residues 318–329 (GDSSTEWQSLKI) the composition is skewed to polar residues.

It is found in the cytoplasm. Its subcellular location is the cytoskeleton. It localises to the microtubule organizing center. The protein resides in the centrosome. Its function is as follows. May regulate phosphatase activity of protein phosphatase 1 (PP1) complexes. In Danio rerio (Zebrafish), this protein is Protein phosphatase 1 regulatory subunit 42 (ppp1r42).